Here is a 243-residue protein sequence, read N- to C-terminus: Type III pantothenate kinase (243 aa).

6–13 (DIGNTVAK) provides a ligand contact to ATP. Residues Y86 and 93 to 96 (GYDR) contribute to the substrate site. The active-site Proton acceptor is the D95. D116 is a K(+) binding site. T119 is an ATP binding site. Position 171 (T171) interacts with substrate.

Belongs to the type III pantothenate kinase family. In terms of assembly, homodimer. NH4(+) serves as cofactor. K(+) is required as a cofactor.

The protein resides in the cytoplasm. It carries out the reaction (R)-pantothenate + ATP = (R)-4'-phosphopantothenate + ADP + H(+). Its pathway is cofactor biosynthesis; coenzyme A biosynthesis; CoA from (R)-pantothenate: step 1/5. Catalyzes the phosphorylation of pantothenate (Pan), the first step in CoA biosynthesis. The chain is Type III pantothenate kinase from Bacteroides fragilis (strain YCH46).